Reading from the N-terminus, the 776-residue chain is Protocadherin beta-16 (776 aa).

An N-terminal signal peptide occupies residues 1–28; the sequence is MEIGWMHNRRQRQVLVFFVLLSLSGAGA. At 29-690 the chain is on the extracellular side; that stretch reads ELGSYSVVEE…TQANSLTVYL (662 aa). Cadherin domains follow at residues 35–133, 138–242, 247–347, 352–451, and 456–561; these read VVEE…SPMF, MILK…APEF, YKVQ…PPQV, LTSP…APTF, and YTLF…SPFV. Residues asparagine 418 and asparagine 436 are each glycosylated (N-linked (GlcNAc...) asparagine). A glycan (N-linked (GlcNAc...) asparagine) is linked at asparagine 567. One can recognise a Cadherin 6 domain in the interval 568–671; it reads GSAPCTELVP…LVDGFSQPFL (104 aa). A helical transmembrane segment spans residues 691-711; it reads VVALASVSSLFLFSVLLFVAV. Over 712–776 the chain is Cytoplasmic; it reads RLCRRSRAAS…LKPIIPNFSP (65 aa).

The protein resides in the membrane. Its function is as follows. Potential calcium-dependent cell-adhesion protein. May be involved in the establishment and maintenance of specific neuronal connections in the brain. This is Protocadherin beta-16 from Homo sapiens (Human).